Here is a 387-residue protein sequence, read N- to C-terminus: EARP-interacting protein homolog (387 aa).

4 WD repeats span residues 132-172, 182-222, 226-266, and 270-310; these read SAHG…AKAT, KGQL…QIYC, AHGQ…EPVK, and EHSH…SEPF. The interval 309-337 is disordered; it reads PFGHLVDDDDLSDPEENQQEDKGKEPLQD. Positions 315 to 326 are enriched in acidic residues; that stretch reads DDDDLSDPEENQ. The WD 5 repeat unit spans residues 345–385; the sequence is EHEDSVYAVEWSAADPWLFASLSYDGRLVINRVPRALKYRI.

It belongs to the WD repeat EIPR1 family.

The protein resides in the golgi apparatus. Its subcellular location is the trans-Golgi network. In terms of biological role, may act as a component of endosomal retrieval machinery that is involved in protein transport from early endosomes to either recycling endosomes or the trans-Golgi network. The chain is EARP-interacting protein homolog from Danio rerio (Zebrafish).